A 380-amino-acid chain; its full sequence is Tryptophan 2,3-dioxygenase (380 aa).

Substrate contacts are provided by residues 57-61 and Arg-128; that span reads FIITH. A heme-binding site is contributed by His-313. Position 328 (Thr-328) interacts with substrate.

Belongs to the tryptophan 2,3-dioxygenase family. As to quaternary structure, homotetramer. Dimer of dimers. Heme serves as cofactor.

The enzyme catalyses L-tryptophan + O2 = N-formyl-L-kynurenine. It participates in amino-acid degradation; L-tryptophan degradation via kynurenine pathway; L-kynurenine from L-tryptophan: step 1/2. It functions in the pathway pigment biosynthesis; ommochrome biosynthesis. Its function is as follows. Heme-dependent dioxygenase that catalyzes the oxidative cleavage of the L-tryptophan (L-Trp) pyrrole ring and converts L-tryptophan to N-formyl-L-kynurenine. Catalyzes the oxidative cleavage of the indole moiety. The chain is Tryptophan 2,3-dioxygenase from Drosophila mojavensis (Fruit fly).